The primary structure comprises 560 residues: Membrane protein insertase YidC (560 aa).

6 helical membrane-spanning segments follow: residues 5-25 (IINL…WQYF), 334-354 (AIDF…MNFF), 357-377 (YVGN…LLMF), 431-451 (LPIL…YVTI), 476-496 (LFGL…WPIL), and 522-542 (FMPL…LIYW).

This sequence belongs to the OXA1/ALB3/YidC family. Type 1 subfamily. In terms of assembly, interacts with the Sec translocase complex via SecD. Specifically interacts with transmembrane segments of nascent integral membrane proteins during membrane integration.

Its subcellular location is the cell inner membrane. In terms of biological role, required for the insertion and/or proper folding and/or complex formation of integral membrane proteins into the membrane. Involved in integration of membrane proteins that insert both dependently and independently of the Sec translocase complex, as well as at least some lipoproteins. Aids folding of multispanning membrane proteins. In Rickettsia akari (strain Hartford), this protein is Membrane protein insertase YidC.